The sequence spans 209 residues: Response regulator protein VraR (209 aa).

The Response regulatory domain maps to 4–120 (KVLFVDDHEM…DIAEAIRKTY (117 aa)). D55 bears the 4-aspartylphosphate mark. Residues 141 to 206 (RAELYEMLTE…QAVIYAFQHN (66 aa)) enclose the HTH luxR-type domain. A DNA-binding region (H-T-H motif) is located at residues 165 to 184 (NQEIASASHITIKTVKTHVS).

In terms of processing, phosphorylated by VraS.

The protein resides in the cytoplasm. Functionally, member of the two-component regulatory system VraS/VraR involved in the control of the cell wall peptidoglycan biosynthesis. In Staphylococcus saprophyticus subsp. saprophyticus (strain ATCC 15305 / DSM 20229 / NCIMB 8711 / NCTC 7292 / S-41), this protein is Response regulator protein VraR (vraR).